Here is a 255-residue protein sequence, read N- to C-terminus: Borealin-2 (255 aa).

2 disordered regions span residues 1–24 (MAPRRTRKVSQDSDGQADDQHSFE) and 107–156 (IQKP…STGS). The span at 124–135 (AGQQRSSSQSKT) shows a compositional bias: polar residues.

It belongs to the borealin family. Component of the CPC complex.

The protein resides in the nucleus. It is found in the chromosome. Its subcellular location is the centromere. Component of the chromosomal passenger complex (CPC), a complex that acts as a key regulator of mitosis. The CPC complex has essential functions at the centromere in ensuring correct chromosome alignment and segregation and is required for chromatin-induced microtubule stabilization and spindle assembly. The polypeptide is Borealin-2 (cdca9) (Danio rerio (Zebrafish)).